A 333-amino-acid chain; its full sequence is L-lactate dehydrogenase A chain (333 aa).

NAD(+) is bound by residues 30-58 and Arg100; that span reads GMVG…MEDK. Substrate-binding residues include Arg107, Asn139, and Arg170. Asn139 serves as a coordination point for NAD(+). His194 serves as the catalytic Proton acceptor. Thr249 lines the substrate pocket.

It belongs to the LDH/MDH superfamily. LDH family. As to quaternary structure, homotetramer.

It is found in the cytoplasm. The enzyme catalyses (S)-lactate + NAD(+) = pyruvate + NADH + H(+). It participates in fermentation; pyruvate fermentation to lactate; (S)-lactate from pyruvate: step 1/1. Interconverts simultaneously and stereospecifically pyruvate and lactate with concomitant interconversion of NADH and NAD(+). This is L-lactate dehydrogenase A chain (ldha) from Danio rerio (Zebrafish).